The primary structure comprises 118 residues: MDPRLRAPIFLPILTPETLQKKKQIKGNKTTIYKNGFMLFRSRLHKILNLSGDWAGASAKCSIIWHTLPQNVRLAWSQLAELSHYQDVRRQIAKLERILYSKRLNGHNNYKLHISRVQ.

Positions 29 to 97 (KTTIYKNGFM…VRRQIAKLER (69 aa)) form a DNA-binding region, HMG box.

Its subcellular location is the nucleus. Mating type proteins are sequence specific DNA-binding proteins that act as master switches in yeast differentiation by controlling gene expression in a cell type-specific fashion. Required for conjugation and efficient meiosis. The chain is Mating-type P-specific polypeptide Pc (mat2-Pc) from Schizosaccharomyces pombe (Fission yeast).